A 216-amino-acid chain; its full sequence is Talanin (216 aa).

In terms of tissue distribution, isoform 4 is expressed in placenta, lung, kidney and pancreas.

Its function is as follows. May play a role in uric acid excretion. This is Talanin (ZNF365) from Homo sapiens (Human).